The chain runs to 122 residues: Protein YqjC (122 aa).

An N-terminal signal peptide occupies residues 1 to 20 (MKYRIALAVSLFALSAGSYA). The disordered stretch occupies residues 65–100 (QLRADHQKKIAKQKDEVAERQQDLAEAKQKGDADKI). The span at 66-100 (LRADHQKKIAKQKDEVAERQQDLAEAKQKGDADKI) shows a compositional bias: basic and acidic residues.

The polypeptide is Protein YqjC (yqjC) (Escherichia coli (strain K12)).